The following is a 109-amino-acid chain: Movement protein TGB2 (109 aa).

Topologically, residues 1 to 9 are cytoplasmic; sequence MPLTPPPDF. The chain crosses the membrane as a helical span at residues 10–30; it reads TKVYLSAALGVSLALVVWLLI. Residues 31–72 lie on the Lumenal side of the membrane; the sequence is RSTLPVVGDRDHNLPHGGWYRDGTKSVFYNSPGRLNSIEARK. Residues 73 to 93 form a helical membrane-spanning segment; that stretch reads APLLGQPWAIVVLLVLLIWAS. Over 94 to 109 the chain is Cytoplasmic; it reads HKLGRPNCRACAGSHT.

The protein belongs to the Tymovirales TGBp2 protein family.

Its subcellular location is the host endoplasmic reticulum membrane. Plays a role in viral cell-to-cell propagation, by facilitating genome transport to neighboring plant cells through plasmosdesmata,. The polypeptide is Movement protein TGB2 (Solanum tuberosum (Potato)).